The following is a 478-amino-acid chain: MVRAQWKVIILLILLMVIPSDGLFHSIYRSILVAQPFKGNAGQPLFLSPYIRTGKIKEGQRKSMVSPFPGMYDKSYAGYITVNQTYNSNLFFWFFPARTQPADAPVVLWLQGGPGGSSMFGLFVEHGPYIITSNMTVLSRDFPWTFSLSMLYIDNPVGTGFSFTDHIQGYAIDEDDVAQDLYSALVQFFKLFPEYAKNDFYITGESYAGKYVPAIAYYIHSLNPVRRFKIRLKGIALGDAYTDPETIIGGYATFLYEVGLLDEQQRRHFRKQCRKCIKYIKEQEWMKAFEVLDELLDGDLTAGPSFFQNVTGCTNYYNILQCTEPEDQSYFSKFLSLPQVRQAIHVGNRNFSDGAEVEKYLREDTVKSVKPWLAEIMNYYKVLIYNGQLDIIVAAALTERSLMTMDWKGSYAYRRTHKKIWKIFESDDEVAGYVRRVGKFHQVIVRGGGHILPYDQPLRSFDMINRFIYDRGWEPYKL.

A signal peptide spans 1-22 (MVRAQWKVIILLILLMVIPSDG). 2 N-linked (GlcNAc...) asparagine glycosylation sites follow: N83 and N134. S206 is an active-site residue. N309 and N350 each carry an N-linked (GlcNAc...) asparagine glycan. Catalysis depends on residues D390 and H450.

Belongs to the peptidase S10 family.

Functionally, may be involved in the digestion of phagocytosed particles in the lysosome, participation in an inflammatory protease cascade, and trimming of peptides for antigen presentation. The sequence is that of Probable serine carboxypeptidase CPVL (CPVL) from Rattus norvegicus (Rat).